A 456-amino-acid polypeptide reads, in one-letter code: Bifunctional protein GlmU (456 aa).

The pyrophosphorylase stretch occupies residues 1-228 (MSARLAAIVL…PQEIFGINDR (228 aa)). Residues 10-13 (LAAG), Lys-24, Gln-75, and 80-81 (GT) contribute to the UDP-N-acetyl-alpha-D-glucosamine site. A Mg(2+)-binding site is contributed by Asp-105. UDP-N-acetyl-alpha-D-glucosamine contacts are provided by Gly-142, Glu-157, Asn-172, and Asn-226. Residue Asn-226 coordinates Mg(2+). The linker stretch occupies residues 229-249 (LQLSQASRILNERTLVGLMLS). Residues 250–456 (GVTIVDPLRV…KAPYERTEDG (207 aa)) form an N-acetyltransferase region. UDP-N-acetyl-alpha-D-glucosamine contacts are provided by Arg-331 and Lys-349. Residue His-361 is the Proton acceptor of the active site. 2 residues coordinate UDP-N-acetyl-alpha-D-glucosamine: Tyr-364 and Asn-375. Residues Ala-378, 384–385 (NY), Ala-421, and Arg-437 contribute to the acetyl-CoA site.

This sequence in the N-terminal section; belongs to the N-acetylglucosamine-1-phosphate uridyltransferase family. The protein in the C-terminal section; belongs to the transferase hexapeptide repeat family. As to quaternary structure, homotrimer. It depends on Mg(2+) as a cofactor.

Its subcellular location is the cytoplasm. The enzyme catalyses alpha-D-glucosamine 1-phosphate + acetyl-CoA = N-acetyl-alpha-D-glucosamine 1-phosphate + CoA + H(+). The catalysed reaction is N-acetyl-alpha-D-glucosamine 1-phosphate + UTP + H(+) = UDP-N-acetyl-alpha-D-glucosamine + diphosphate. Its pathway is nucleotide-sugar biosynthesis; UDP-N-acetyl-alpha-D-glucosamine biosynthesis; N-acetyl-alpha-D-glucosamine 1-phosphate from alpha-D-glucosamine 6-phosphate (route II): step 2/2. It participates in nucleotide-sugar biosynthesis; UDP-N-acetyl-alpha-D-glucosamine biosynthesis; UDP-N-acetyl-alpha-D-glucosamine from N-acetyl-alpha-D-glucosamine 1-phosphate: step 1/1. It functions in the pathway bacterial outer membrane biogenesis; LPS lipid A biosynthesis. Catalyzes the last two sequential reactions in the de novo biosynthetic pathway for UDP-N-acetylglucosamine (UDP-GlcNAc). The C-terminal domain catalyzes the transfer of acetyl group from acetyl coenzyme A to glucosamine-1-phosphate (GlcN-1-P) to produce N-acetylglucosamine-1-phosphate (GlcNAc-1-P), which is converted into UDP-GlcNAc by the transfer of uridine 5-monophosphate (from uridine 5-triphosphate), a reaction catalyzed by the N-terminal domain. The protein is Bifunctional protein GlmU of Gloeobacter violaceus (strain ATCC 29082 / PCC 7421).